Reading from the N-terminus, the 78-residue chain is Sec-independent protein translocase protein TatA (78 aa).

The helical transmembrane segment at 1 to 21 (MGGISIWQLLIIAVIVVLLFG) threads the bilayer. The segment covering 47-59 (ESEKKDADFEPKS) has biased composition (basic and acidic residues). A disordered region spans residues 47–78 (ESEKKDADFEPKSLEQQNKQAATESKKDKEQA). Polar residues predominate over residues 60–69 (LEQQNKQAAT).

Belongs to the TatA/E family. As to quaternary structure, the Tat system comprises two distinct complexes: a TatABC complex, containing multiple copies of TatA, TatB and TatC subunits, and a separate TatA complex, containing only TatA subunits. Substrates initially bind to the TatABC complex, which probably triggers association of the separate TatA complex to form the active translocon.

The protein localises to the cell inner membrane. Its function is as follows. Part of the twin-arginine translocation (Tat) system that transports large folded proteins containing a characteristic twin-arginine motif in their signal peptide across membranes. TatA could form the protein-conducting channel of the Tat system. The protein is Sec-independent protein translocase protein TatA of Vibrio vulnificus (strain YJ016).